Here is a 350-residue protein sequence, read N- to C-terminus: Nicotinate-nucleotide--dimethylbenzimidazole phosphoribosyltransferase (350 aa).

The active-site Proton acceptor is glutamate 317.

Belongs to the CobT family.

The enzyme catalyses 5,6-dimethylbenzimidazole + nicotinate beta-D-ribonucleotide = alpha-ribazole 5'-phosphate + nicotinate + H(+). It functions in the pathway nucleoside biosynthesis; alpha-ribazole biosynthesis; alpha-ribazole from 5,6-dimethylbenzimidazole: step 1/2. Functionally, catalyzes the synthesis of alpha-ribazole-5'-phosphate from nicotinate mononucleotide (NAMN) and 5,6-dimethylbenzimidazole (DMB). This is Nicotinate-nucleotide--dimethylbenzimidazole phosphoribosyltransferase from Shewanella sp. (strain ANA-3).